Here is a 400-residue protein sequence, read N- to C-terminus: Large envelope protein (400 aa).

Position 1 is an N-acetylmethionine (Met-1). Disordered regions lie at residues 1–20 and 88–115; these read MGGWSSKPRKGMGTNLSVPN and VSTIPPPASTNRQSGRQPTPISPPLRDS. Residue Gly-2 is the site of N-myristoyl glycine; by host attachment. The tract at residues 2–119 is pre-S1; the sequence is GGWSSKPRKG…PPLRDSHPQA (118 aa). The tract at residues 2–174 is pre-S; it reads GGWSSKPRKG…SARTGDPVTN (173 aa). Over 2–181 the chain is Virion surface; in external conformation; it reads GGWSSKPRKG…VTNMENITSG (180 aa). At 2–253 the chain is on the intravirion; in internal conformation side; sequence GGWSSKPRKG…PGYRWMCLRR (252 aa). The N-linked (GlcNAc...) asparagine glycan is linked to Trp-4. Residues 88–106 show a composition bias toward polar residues; that stretch reads VSTIPPPASTNRQSGRQPT. A pre-S2 region spans residues 120–174; that stretch reads MQWNSTAFHQTLQDPRVRGLYLPAGGSSSGTVNPAPNIASHISSISARTGDPVTN. The chain crosses the membrane as a helical span at residues 182-202; sequence FLGPLLVLQAGFFLLTRILTI. Residues 203–253 lie on the Intravirion; in external conformation side of the membrane; the sequence is PQSLDSWWTSLNFLGGSPVCLGQNSQSPTSNHSPTSCPPICPGYRWMCLRR. A helical transmembrane segment spans residues 254–274; the sequence is FIIFLFILLLCLIFLLVLLDY. At 275–348 the chain is on the virion surface side; the sequence is QGMLPVCPLI…WASVRFSWLS (74 aa). A glycan (N-linked (GlcNAc...) asparagine; by host) is linked at Asn-320. A helical transmembrane segment spans residues 349 to 369; it reads LLVPFVQWFVGLSPTVWLSAI. The Intravirion segment spans residues 370-375; the sequence is WMMWYW. The chain crosses the membrane as a helical span at residues 376-398; it reads GPSLYSIVRPFIPLLPIFFCLWV. Over 399 to 400 the chain is Virion surface; sequence YI.

This sequence belongs to the orthohepadnavirus major surface antigen family. In its internal form (Li-HBsAg), interacts with the capsid protein and with the isoform S. Interacts with host chaperone CANX. In terms of assembly, associates with host chaperone CANX through its pre-S2 N glycan; this association may be essential for isoform M proper secretion. As to quaternary structure, interacts with isoform L. Interacts with the antigens of satellite virus HDV (HDVAgs); this interaction is required for encapsidation of HDV genomic RNA. Post-translationally, isoform M is N-terminally acetylated by host at a ratio of 90%, and N-glycosylated by host at the pre-S2 region. Myristoylated.

It localises to the virion membrane. The large envelope protein exists in two topological conformations, one which is termed 'external' or Le-HBsAg and the other 'internal' or Li-HBsAg. In its external conformation the protein attaches the virus to cell receptors and thereby initiating infection. This interaction determines the species specificity and liver tropism. This attachment induces virion internalization predominantly through caveolin-mediated endocytosis. The large envelope protein also assures fusion between virion membrane and endosomal membrane. In its internal conformation the protein plays a role in virion morphogenesis and mediates the contact with the nucleocapsid like a matrix protein. In terms of biological role, the middle envelope protein plays an important role in the budding of the virion. It is involved in the induction of budding in a nucleocapsid independent way. In this process the majority of envelope proteins bud to form subviral lipoprotein particles of 22 nm of diameter that do not contain a nucleocapsid. This Homo sapiens (Human) protein is Large envelope protein.